Consider the following 242-residue polypeptide: Uridylate kinase (242 aa).

11-14 (KLSG) provides a ligand contact to ATP. Residues 19–24 (GNMGYG) are involved in allosteric activation by GTP. Gly-53 is a binding site for UMP. 2 residues coordinate ATP: Gly-54 and Arg-58. UMP-binding positions include Asp-73 and 134–141 (SGNPFFTT). ATP contacts are provided by Thr-161, Tyr-167, and Asp-170.

It belongs to the UMP kinase family. As to quaternary structure, homohexamer.

The protein localises to the cytoplasm. The catalysed reaction is UMP + ATP = UDP + ADP. The protein operates within pyrimidine metabolism; CTP biosynthesis via de novo pathway; UDP from UMP (UMPK route): step 1/1. Its activity is regulated as follows. Allosterically activated by GTP. Inhibited by UTP. Its function is as follows. Catalyzes the reversible phosphorylation of UMP to UDP. This Trichormus variabilis (strain ATCC 29413 / PCC 7937) (Anabaena variabilis) protein is Uridylate kinase.